The sequence spans 397 residues: Dual specificity mitogen-activated protein kinase kinase 2 (397 aa).

The disordered stretch occupies residues Met1–Thr21. Residues Phe69–Ile366 enclose the Protein kinase domain. Residues Leu75–Val83 and Lys98 each bind ATP. Asp191 (proton acceptor) is an active-site residue. Residues Ser219 and Ser223 each carry the phosphoserine; by RAF modification. Residues Gly284–Gly306 are disordered.

Belongs to the protein kinase superfamily. STE Ser/Thr protein kinase family. MAP kinase kinase subfamily. Phosphorylation on Ser/Thr by MAP kinase kinase kinases (RAF) positively regulates the kinase activity.

The enzyme catalyses L-seryl-[protein] + ATP = O-phospho-L-seryl-[protein] + ADP + H(+). The catalysed reaction is L-threonyl-[protein] + ATP = O-phospho-L-threonyl-[protein] + ADP + H(+). It carries out the reaction L-tyrosyl-[protein] + ATP = O-phospho-L-tyrosyl-[protein] + ADP + H(+). In terms of biological role, catalyzes the concomitant phosphorylation of a threonine and a tyrosine residue in a Thr-Glu-Tyr sequence located in MAP kinases. This is Dual specificity mitogen-activated protein kinase kinase 2 (map2k2) from Cyprinus carpio (Common carp).